Reading from the N-terminus, the 677-residue chain is DNA ligase (677 aa).

Residues 35 to 39 (DAEFD), 85 to 86 (SL), and Glu110 each bind NAD(+). Residue Lys112 is the N6-AMP-lysine intermediate of the active site. Residues Arg133 and Glu173 each contribute to the NAD(+) site. Residues 189 to 210 (QKEGGKPFANPRNAAAGSLRQK) are disordered. 2 residues coordinate NAD(+): Lys289 and Lys313. Cys407, Cys410, Cys426, and Cys432 together coordinate Zn(2+). One can recognise a BRCT domain in the interval 596–677 (IPDQVLEGLT…FKQLLANGTV (82 aa)).

It belongs to the NAD-dependent DNA ligase family. LigA subfamily. Mg(2+) is required as a cofactor. The cofactor is Mn(2+).

It carries out the reaction NAD(+) + (deoxyribonucleotide)n-3'-hydroxyl + 5'-phospho-(deoxyribonucleotide)m = (deoxyribonucleotide)n+m + AMP + beta-nicotinamide D-nucleotide.. DNA ligase that catalyzes the formation of phosphodiester linkages between 5'-phosphoryl and 3'-hydroxyl groups in double-stranded DNA using NAD as a coenzyme and as the energy source for the reaction. It is essential for DNA replication and repair of damaged DNA. This is DNA ligase from Corynebacterium diphtheriae (strain ATCC 700971 / NCTC 13129 / Biotype gravis).